Consider the following 273-residue polypeptide: 1,4-dihydroxy-2-naphthoyl-CoA synthase (273 aa).

Substrate-binding positions include arginine 34, 73–77, tyrosine 85, 117–121, threonine 143, serine 149, tyrosine 246, and lysine 261; these read SGGDQ and YAVGG. Residue 142 to 144 coordinates hydrogencarbonate; that stretch reads QTG. The segment covering 254–265 has biased composition (basic and acidic residues); it reads GRDAFKEKRDPD. A disordered region spans residues 254-273; sequence GRDAFKEKRDPDFDQFPKFP.

The protein belongs to the enoyl-CoA hydratase/isomerase family. MenB subfamily. It depends on hydrogencarbonate as a cofactor.

It carries out the reaction 2-succinylbenzoyl-CoA + H(+) = 1,4-dihydroxy-2-naphthoyl-CoA + H2O. It participates in quinol/quinone metabolism; 1,4-dihydroxy-2-naphthoate biosynthesis; 1,4-dihydroxy-2-naphthoate from chorismate: step 6/7. The protein operates within quinol/quinone metabolism; menaquinone biosynthesis. Functionally, converts o-succinylbenzoyl-CoA (OSB-CoA) to 1,4-dihydroxy-2-naphthoyl-CoA (DHNA-CoA). This is 1,4-dihydroxy-2-naphthoyl-CoA synthase from Staphylococcus aureus (strain MSSA476).